The primary structure comprises 269 residues: Eukaryotic translation initiation factor 3 subunit G-1 (269 aa).

One can recognise an RRM domain in the interval 188 to 266; that stretch reads AAIRISNLSE…LILSVEWSKP (79 aa).

It belongs to the eIF-3 subunit G family. In terms of assembly, component of the eukaryotic translation initiation factor 3 (eIF-3) complex. The eIF-3 complex interacts with pix.

The protein resides in the cytoplasm. RNA-binding component of the eukaryotic translation initiation factor 3 (eIF-3) complex, which is involved in protein synthesis of a specialized repertoire of mRNAs and, together with other initiation factors, stimulates binding of mRNA and methionyl-tRNAi to the 40S ribosome. The eIF-3 complex specifically targets and initiates translation of a subset of mRNAs involved in cell proliferation. This subunit can bind 18S rRNA. This is Eukaryotic translation initiation factor 3 subunit G-1 from Drosophila willistoni (Fruit fly).